The following is a 516-amino-acid chain: Maturase K (516 aa).

Belongs to the intron maturase 2 family. MatK subfamily.

It is found in the plastid. The protein resides in the chloroplast. Functionally, usually encoded in the trnK tRNA gene intron. Probably assists in splicing its own and other chloroplast group II introns. The protein is Maturase K of Disporum sessile (Japanese fairy bells).